A 126-amino-acid polypeptide reads, in one-letter code: Protein ApaG (126 aa).

In terms of domain architecture, ApaG spans 2–126 (DVSLPCIKIQ…FRLAVPHVLN (125 aa)).

This Vibrio cholerae serotype O1 (strain ATCC 39541 / Classical Ogawa 395 / O395) protein is Protein ApaG.